The chain runs to 138 residues: MVLNQNKNSNKAEYGGIVVSVFYLILFFLILNITIYFHKSTNFTVVVKNSVLTSFFVNLLLVCLQGIFRLKTCDGMRYEISKFNRYLKLGSVYAKPLVSFNQYQDQSATYRQKTSGFWWMNLIVYLVGSLVSGLVSLL.

The next 3 membrane-spanning stretches (helical) occupy residues 17-37, 43-63, and 117-137; these read IVVSVFYLILFFLILNITIYF, FTVVVKNSVLTSFFVNLLLVC, and FWWMNLIVYLVGSLVSGLVSL.

Its subcellular location is the cell membrane. This is an uncharacterized protein from Mycoplasma genitalium (strain ATCC 33530 / DSM 19775 / NCTC 10195 / G37) (Mycoplasmoides genitalium).